Reading from the N-terminus, the 93-residue chain is Large ribosomal subunit protein mL41 (93 aa).

Residues 1 to 13 (MHQSLLCFGARRL) constitute a mitochondrion transit peptide.

This sequence belongs to the mitochondrion-specific ribosomal protein mL41 family. Component of the mitochondrial large ribosomal subunit (mt-LSU). Mature yeast 74S mitochondrial ribosomes consist of a small (37S) and a large (54S) subunit. The 37S small subunit contains a 15S ribosomal RNA (15S mt-rRNA) and at least 32 different proteins. The 54S large subunit contains a 21S rRNA (21S mt-rRNA) and at least 45 different proteins.

The protein resides in the mitochondrion. Its function is as follows. Component of the mitochondrial ribosome (mitoribosome), a dedicated translation machinery responsible for the synthesis of mitochondrial genome-encoded proteins, including at least some of the essential transmembrane subunits of the mitochondrial respiratory chain. The mitoribosomes are attached to the mitochondrial inner membrane and translation products are cotranslationally integrated into the membrane. This is Large ribosomal subunit protein mL41 (mrpl27) from Schizosaccharomyces pombe (strain 972 / ATCC 24843) (Fission yeast).